The chain runs to 130 residues: Trypsin inhibitor (130 aa).

The segment at 27 to 49 (LHKQARQSGSGPSPQGPQQRPPL) is disordered. The segment covering 32–49 (RQSGSGPSPQGPQQRPPL) has biased composition (low complexity).

The protein belongs to the 2S seed storage albumins family. The protein consists of two chains linked by disulfide bonds.

Inhibits trypsin with a Ki of 7 x 10(-6) M. The protein is Trypsin inhibitor of Mutarda arvensis (Charlock mustard).